Consider the following 236-residue polypeptide: Methylosome subunit pICln (236 aa).

An N-acetylserine modification is found at Ser-2. The interval 88–109 (EESKEPPSDEDEEDNDDIEPIS) is disordered. Residues Ser-95, Ser-143, Ser-192, Ser-194, Ser-197, and Ser-209 each carry the phosphoserine modification. A compositionally biased stretch (acidic residues) spans 95 to 107 (SDEDEEDNDDIEP). At Thr-222 the chain carries Phosphothreonine.

Belongs to the pICln (TC 1.A.47) family. As to quaternary structure, component of the methylosome, a 20S complex containing at least PRMT5/SKB1, WDR77/MEP50 and CLNS1A/pICln. May mediate SNRPD1 and SNRPD3 methylation. Forms a 6S pICln-Sm complex composed of CLNS1A/pICln, SNRPD1, SNRPD2, SNRPE, SNRPF and SNRPG; ring-like structure where CLNS1A/pICln mimics additional Sm proteins and which is unable to assemble into the core snRNP. Interacts with LSM10 and LSM11.

It is found in the cytoplasm. The protein resides in the cytosol. The protein localises to the nucleus. It localises to the cytoskeleton. Functionally, involved in both the assembly of spliceosomal snRNPs and the methylation of Sm proteins. Chaperone that regulates the assembly of spliceosomal U1, U2, U4 and U5 small nuclear ribonucleoproteins (snRNPs), the building blocks of the spliceosome, and thereby plays an important role in the splicing of cellular pre-mRNAs. Most spliceosomal snRNPs contain a common set of Sm proteins SNRPB, SNRPD1, SNRPD2, SNRPD3, SNRPE, SNRPF and SNRPG that assemble in a heptameric protein ring on the Sm site of the small nuclear RNA to form the core snRNP (Sm core). In the cytosol, the Sm proteins SNRPD1, SNRPD2, SNRPE, SNRPF and SNRPG are trapped in an inactive 6S pICln-Sm complex by the chaperone CLNS1A that controls the assembly of the core snRNP. Dissociation by the SMN complex of CLNS1A from the trapped Sm proteins and their transfer to an SMN-Sm complex triggers the assembly of core snRNPs and their transport to the nucleus. This is Methylosome subunit pICln (Clns1a) from Mus musculus (Mouse).